The primary structure comprises 633 residues: Kelch repeat and BTB domain-containing protein 11 (633 aa).

The interval 1-118 (MENSVAPFVL…EDPPSRHEHA (118 aa)) is disordered. The span at 35-60 (STAQTPCSLSASLCFSSGDDSPPQSR) shows a compositional bias: polar residues. A compositionally biased stretch (low complexity) spans 61-73 (ASAAEGSEASPPS). Phosphoserine occurs at positions 70, 73, 92, 95, 107, and 113. The 61-residue stretch at 146–206 (PDLVIEVAGR…AYSGRMAGVR (61 aa)) folds into the BTB domain. 4 Kelch repeats span residues 317–365 (RPQS…VLFN), 366–418 (YLFL…ALDG), 419–463 (HLYA…TCNG), and 465–506 (IYVS…ALDG).

The sequence is that of Kelch repeat and BTB domain-containing protein 11 (Kbtbd11) from Mus musculus (Mouse).